Reading from the N-terminus, the 143-residue chain is UPF0201 protein PAE1632 (143 aa).

Belongs to the UPF0201 family.

This Pyrobaculum aerophilum (strain ATCC 51768 / DSM 7523 / JCM 9630 / CIP 104966 / NBRC 100827 / IM2) protein is UPF0201 protein PAE1632.